A 600-amino-acid chain; its full sequence is Adenine deaminase 4 (600 aa).

It belongs to the metallo-dependent hydrolases superfamily. Adenine deaminase family. Requires Mn(2+) as cofactor.

It carries out the reaction adenine + H2O + H(+) = hypoxanthine + NH4(+). The sequence is that of Adenine deaminase 4 from Rhizobium meliloti (strain 1021) (Ensifer meliloti).